The chain runs to 245 residues: 2,3,4,5-tetrahydropyridine-2,6-dicarboxylate N-acetyltransferase (245 aa).

It belongs to the transferase hexapeptide repeat family. DapH subfamily.

The enzyme catalyses (S)-2,3,4,5-tetrahydrodipicolinate + acetyl-CoA + H2O = L-2-acetamido-6-oxoheptanedioate + CoA. The protein operates within amino-acid biosynthesis; L-lysine biosynthesis via DAP pathway; LL-2,6-diaminopimelate from (S)-tetrahydrodipicolinate (acetylase route): step 1/3. Functionally, catalyzes the transfer of an acetyl group from acetyl-CoA to tetrahydrodipicolinate. This Methanopyrus kandleri (strain AV19 / DSM 6324 / JCM 9639 / NBRC 100938) protein is 2,3,4,5-tetrahydropyridine-2,6-dicarboxylate N-acetyltransferase.